Here is a 678-residue protein sequence, read N- to C-terminus: RAS guanyl-releasing protein 4 (678 aa).

Composition is skewed to basic residues over residues 1–10 and 20–32; these read MNRKDIKRKS and GHGR…RHKT. 2 disordered regions span residues 1–33 and 165–185; these read MNRK…HKTC and GDAS…MSSP. One can recognise an N-terminal Ras-GEF domain in the interval 49-175; it reads GVLSESSCSV…DASNLLSPGG (127 aa). The region spanning 201–432 is the Ras-GEF domain; it reads ETEELAQHLT…YELSYAREPR (232 aa). The region spanning 466–501 is the EF-hand domain; sequence HVEQLVESVFKNYDPEGHGSISLEDFEKLSANFPFA. A Phorbol-ester/DAG-type zinc finger spans residues 540 to 595; that stretch reads LHAFQEVTFRKPTFCHSCNGFVSTGPLWGVTKRGYRCQDCGLCCHRHCRDQVRVEC. Disordered stretches follow at residues 598 to 620 and 651 to 678; these read RPET…LPPT and SSHS…KSSV. The segment covering 605–619 has biased composition (pro residues); that stretch reads PGPPGAPGPATPLPP.

It belongs to the RASGRP family. In terms of tissue distribution, expressed by mast cells and their progenitors (at protein level).

It localises to the cytoplasm. It is found in the cell membrane. Functions as a cation- and diacylglycerol (DAG)-regulated nucleotide exchange factor activating Ras through the exchange of bound GDP for GTP. In neutrophils, participates in a phospholipase C-activating N-formyl peptide-activated GPCR (G protein-coupled receptor) signaling pathway by promoting Ras-mediated activation of PIK3CG/PI3Kgamma to promote neutrophil functional responses. In CD117(+) dendritic cells and mast cells, participates in an lipopolysaccharide (LPS)-activated signaling pathway that stimulates the production of interferon-gamma and other pro-inflammatory cytokines by natural killer (NK) cells. May function in mast cell differentiation. Does not appear to be required for the development of B-cells, DC-cells, T-cells, or NK-cells. This chain is RAS guanyl-releasing protein 4 (Rasgrp4), found in Rattus norvegicus (Rat).